The sequence spans 415 residues: Methylmalonic aciduria type A homolog, mitochondrial (415 aa).

Residues 1–62 constitute a mitochondrion transit peptide; that stretch reads MTISTLLLSP…LLSDGFRRTL (62 aa). GTP contacts are provided by residues 147–155, D289, and 325–327; these read GPPGAGKST and SAR.

This sequence belongs to the SIMIBI class G3E GTPase family. ArgK/MeaB subfamily. As to quaternary structure, homodimer. Interacts with MMUT (the apoenzyme form); the interaction is GTP dependent.

Its subcellular location is the mitochondrion. It localises to the cytoplasm. It catalyses the reaction GTP + H2O = GDP + phosphate + H(+). GTPase activity is stimulated by MMUT. GTPase, binds and hydrolyzes GTP. Involved in intracellular vitamin B12 metabolism, mediates the transport of cobalamin (Cbl) into mitochondria for the final steps of adenosylcobalamin (AdoCbl) synthesis. Functions as a G-protein chaperone that assists AdoCbl cofactor delivery from MMAB to the methylmalonyl-CoA mutase (MMUT). Plays a dual role as both a protectase and a reactivase for MMUT. Protects MMUT from progressive inactivation by oxidation by decreasing the rate of the formation of the oxidized inactive cofactor hydroxocobalamin (OH2Cbl). Additionally acts a reactivase by promoting the replacement of OH2Cbl by the active cofactor AdoCbl, restoring the activity of MMUT in the presence and hydrolysis of GTP. This chain is Methylmalonic aciduria type A homolog, mitochondrial, found in Mus musculus (Mouse).